The primary structure comprises 137 residues: MLVPKRVKHRREFRGKMRGEAKGGKEVAFGEYGLQATTSHWITNRQIEAARIAMTRYMKRGGKVWIKIFPHKSYTAKAIGVRMGSGKGAPEGWVAPVKRGKVMFEVAGVSEEIAREALRLASHKLPVKCKFVKREAE.

This sequence belongs to the universal ribosomal protein uL16 family. As to quaternary structure, part of the 50S ribosomal subunit.

Functionally, binds 23S rRNA and is also seen to make contacts with the A and possibly P site tRNAs. This is Large ribosomal subunit protein uL16 from Streptococcus sanguinis (strain SK36).